A 292-amino-acid chain; its full sequence is Nucleotide-binding protein azo0399 (292 aa).

8–15 serves as a coordination point for ATP; it reads GLSGSGKS. Residue 57–60 coordinates GTP; sequence DMRS.

It belongs to the RapZ-like family.

In terms of biological role, displays ATPase and GTPase activities. The polypeptide is Nucleotide-binding protein azo0399 (Azoarcus sp. (strain BH72)).